We begin with the raw amino-acid sequence, 567 residues long: Urease subunit alpha (567 aa).

The Urease domain maps to 129–567 (GGIDAHIHFI…LPLTQRYCLF (439 aa)). Histidine 134, histidine 136, and lysine 217 together coordinate Ni(2+). An N6-carboxylysine modification is found at lysine 217. Position 219 (histidine 219) interacts with substrate. Ni(2+) is bound by residues histidine 246 and histidine 272. Histidine 320 (proton donor) is an active-site residue. Residue aspartate 360 coordinates Ni(2+).

The protein belongs to the metallo-dependent hydrolases superfamily. Urease alpha subunit family. As to quaternary structure, heterotrimer of UreA (gamma), UreB (beta) and UreC (alpha) subunits. Three heterotrimers associate to form the active enzyme. Ni cation is required as a cofactor. Post-translationally, carboxylation allows a single lysine to coordinate two nickel ions.

Its subcellular location is the cytoplasm. It carries out the reaction urea + 2 H2O + H(+) = hydrogencarbonate + 2 NH4(+). Its pathway is nitrogen metabolism; urea degradation; CO(2) and NH(3) from urea (urease route): step 1/1. The chain is Urease subunit alpha from Psychromonas ingrahamii (strain DSM 17664 / CCUG 51855 / 37).